The primary structure comprises 98 residues: Large ribosomal subunit protein uL23 (98 aa).

The protein belongs to the universal ribosomal protein uL23 family. Part of the 50S ribosomal subunit. Contacts protein L29, and trigger factor when it is bound to the ribosome.

Its function is as follows. One of the early assembly proteins it binds 23S rRNA. One of the proteins that surrounds the polypeptide exit tunnel on the outside of the ribosome. Forms the main docking site for trigger factor binding to the ribosome. In Methylobacterium sp. (strain 4-46), this protein is Large ribosomal subunit protein uL23.